The chain runs to 270 residues: Gene 1 protein (270 aa).

Residues 225-249 (WAEEDPPVAAVPLEPEDATAPGKEP) are disordered.

The polypeptide is Gene 1 protein (1) (Mycobacterium (Mycobacteriophage D29)).